We begin with the raw amino-acid sequence, 46 residues long: DNA-directed RNA polymerases I, II, and III subunit rpabc4 (46 aa).

Cys7, Cys10, Cys24, and Cys27 together coordinate Zn(2+). Residues 7–27 (CGECGAEHEIKPKEPVKCKDC) form a C4-type zinc finger.

This sequence belongs to the archaeal Rpo12/eukaryotic RPC10 RNA polymerase subunit family. As to quaternary structure, component of the RNA polymerase I (Pol I), RNA polymerase II (Pol II) and RNA polymerase III (Pol III) complexes consisting of at least 13, 12 and 17 subunits, respectively.

Its subcellular location is the nucleus. In terms of biological role, DNA-dependent RNA polymerase catalyzes the transcription of DNA into RNA using the four ribonucleoside triphosphates as substrates. Common component of RNA polymerases I, II and III which synthesize ribosomal RNA precursors, mRNA precursors and many functional non-coding RNAs, and a small RNAs, such as 5S rRNA and tRNAs, respectively. This is DNA-directed RNA polymerases I, II, and III subunit rpabc4 (polr2k) from Dictyostelium discoideum (Social amoeba).